A 64-amino-acid chain; its full sequence is uncharacterized protein (64 aa).

The protein localises to the mitochondrion. This is an uncharacterized protein from Marchantia polymorpha (Common liverwort).